Consider the following 282-residue polypeptide: Endonuclease V (282 aa).

Mg(2+) is bound by residues aspartate 52 and aspartate 126. Residues 250 to 282 (SLGLPGPPTPRSPKAQRPVACPKGDSGESSALC) are disordered.

It belongs to the endonuclease V family. As to quaternary structure, monomer. Interacts with PABPC1; the interaction is RNA-dependent and stimulates ENDOV activity. It depends on Mg(2+) as a cofactor.

The protein resides in the cytoplasm. It localises to the nucleus. It is found in the nucleolus. The protein localises to the stress granule. Its activity is regulated as follows. Inhibited by normal intracellular concentrations of ATP. Functionally, endoribonuclease that specifically cleaves inosine-containing RNAs: cleaves RNA at the second phosphodiester bond 3' to inosine. Active against both single-stranded and double-stranded RNAs. Has strong preference for single-stranded RNAs (ssRNAs) toward double-stranded RNAs (dsRNAs). Cleaves mRNAs and tRNAs containing inosine. Also able to cleave structure-specific dsRNA substrates containing the specific sites 5'-IIUI-3' and 5'-UIUU-3'. Inosine is present in a number of RNAs following editing; the function of inosine-specific endoribonuclease is still unclear: it could either play a regulatory role in edited RNAs, or be involved in antiviral response by removing the hyperedited long viral dsRNA genome that has undergone A-to-I editing. Binds branched DNA structures. Its function is as follows. Endoribonuclease that specifically cleaves inosine-containing RNAs: cleaves RNA at the second phosphodiester bond 3' to inosine. Active against both single-stranded and double-stranded RNAs. Cleaves tRNAs containing inosine. The polypeptide is Endonuclease V (ENDOV) (Homo sapiens (Human)).